Reading from the N-terminus, the 441-residue chain is Histidine--tRNA ligase (441 aa).

Belongs to the class-II aminoacyl-tRNA synthetase family. As to quaternary structure, homodimer.

Its subcellular location is the cytoplasm. It carries out the reaction tRNA(His) + L-histidine + ATP = L-histidyl-tRNA(His) + AMP + diphosphate + H(+). In Synechococcus sp. (strain WH7803), this protein is Histidine--tRNA ligase.